The primary structure comprises 300 residues: Acetylglutamate kinase (300 aa).

Substrate contacts are provided by residues Gly-73–Gly-74, Arg-95, and Asn-197.

This sequence belongs to the acetylglutamate kinase family. ArgB subfamily.

The protein resides in the cytoplasm. It carries out the reaction N-acetyl-L-glutamate + ATP = N-acetyl-L-glutamyl 5-phosphate + ADP. The protein operates within amino-acid biosynthesis; L-arginine biosynthesis; N(2)-acetyl-L-ornithine from L-glutamate: step 2/4. Functionally, catalyzes the ATP-dependent phosphorylation of N-acetyl-L-glutamate. The polypeptide is Acetylglutamate kinase (Polynucleobacter asymbioticus (strain DSM 18221 / CIP 109841 / QLW-P1DMWA-1) (Polynucleobacter necessarius subsp. asymbioticus)).